We begin with the raw amino-acid sequence, 319 residues long: CD2 antigen cytoplasmic tail-binding protein 2 homolog (319 aa).

Disordered stretches follow at residues 1–57 (MASK…EDDV) and 105–124 (NAFD…KNEP). Residues 12 to 24 (KVKEESFKKHTLD) show a composition bias toward basic and acidic residues. A phosphoserine mark is found at serine 25 and serine 30. The segment covering 25–47 (SDEEDSDDYEREYLNDSDIEGGE) has biased composition (acidic residues). A Phosphotyrosine modification is found at tyrosine 37. Serine 41 is modified (phosphoserine). The segment covering 109 to 124 (PAKDEENSSDEEKNEP) has biased composition (basic and acidic residues). One can recognise a GYF domain in the interval 260–316 (EVTWEFKWSQDETDIQGPFSTEKMLKWSQENYFKNGVYVRKCGENTNFYTSNRIDFD).

The protein resides in the nucleus. Functionally, required for embryonic epithelial tissue repair, but not for the assembly of the actomyosin cable at the wound edge. Probably acts downstream of rl in the regulation of Ddc and msn transcription to promote wound healing. The protein is CD2 antigen cytoplasmic tail-binding protein 2 homolog (holn1) of Drosophila melanogaster (Fruit fly).